The following is a 477-amino-acid chain: PTS system glucose-specific EIICB component (477 aa).

One can recognise a PTS EIIC type-1 domain in the interval Met1 to Asn388. Helical transmembrane passes span Ser15–Ala35, Thr51–Phe71, Gly76–Val96, His112–Phe132, Phe152–Trp172, Pro191–His211, Leu250–His270, Ile280–Ile300, Phe304–Pro324, and Phe357–Ile377. The region spanning Asn399 to Ile477 is the PTS EIIB type-1 domain. Cys421 serves as the catalytic Phosphocysteine intermediate; for EIIB activity. Cys421 is subject to Phosphocysteine.

The protein resides in the cell inner membrane. The enzyme catalyses N(pros)-phospho-L-histidyl-[protein] + D-glucose(out) = D-glucose 6-phosphate(in) + L-histidyl-[protein]. Functionally, the phosphoenolpyruvate-dependent sugar phosphotransferase system (sugar PTS), a major carbohydrate active transport system, catalyzes the phosphorylation of incoming sugar substrates concomitantly with their translocation across the cell membrane. The enzyme II complex composed of PtsG and Crr is involved in glucose transport. This chain is PTS system glucose-specific EIICB component (ptsG), found in Buchnera aphidicola subsp. Acyrthosiphon pisum (strain APS) (Acyrthosiphon pisum symbiotic bacterium).